We begin with the raw amino-acid sequence, 49 residues long: Large ribosomal subunit protein bL33B (49 aa).

This sequence belongs to the bacterial ribosomal protein bL33 family.

The polypeptide is Large ribosomal subunit protein bL33B (Lacticaseibacillus paracasei (strain ATCC 334 / BCRC 17002 / CCUG 31169 / CIP 107868 / KCTC 3260 / NRRL B-441) (Lactobacillus paracasei)).